Consider the following 363-residue polypeptide: U-box domain-containing protein 62 (363 aa).

The disordered stretch occupies residues 74 to 117; the sequence is KPIIGNPNDSGGSDGEDDVDVEEEDEDDDLDGNEGDIGMNKDAG. The segment covering 87–107 has biased composition (acidic residues); that stretch reads DGEDDVDVEEEDEDDDLDGNE. The U-box domain maps to 181–253; it reads SLRTILSDPT…QAFCREENSQ (73 aa). A disordered region spans residues 343 to 363; the sequence is AKAPEDPSAKATPNKMVSNWL.

It catalyses the reaction S-ubiquitinyl-[E2 ubiquitin-conjugating enzyme]-L-cysteine + [acceptor protein]-L-lysine = [E2 ubiquitin-conjugating enzyme]-L-cysteine + N(6)-ubiquitinyl-[acceptor protein]-L-lysine.. The protein operates within protein modification; protein ubiquitination. Functionally, functions as an E3 ubiquitin ligase. The chain is U-box domain-containing protein 62 (PUB62) from Arabidopsis thaliana (Mouse-ear cress).